A 402-amino-acid polypeptide reads, in one-letter code: UDP-GlcNAc:betaGal beta-1,3-N-acetylglucosaminyltransferase 9 (402 aa).

The Cytoplasmic segment spans residues 1–10 (MRRRLRLRRD). A helical; Signal-anchor for type II membrane protein transmembrane segment spans residues 11-27 (ALLTLLLGASLGLLLYA). Topologically, residues 28-402 (QRDGAAPTAS…VAAGPFQWDS (375 aa)) are lumenal. Low complexity predominate over residues 32-47 (AAPTASAPRGRGRAAP). Residues 32 to 83 (AAPTASAPRGRGRAAPRPTPGPRAFQLPDAGAAPPAYEGDTPAPPTPTGPFD) form a disordered region.

Belongs to the glycosyltransferase 31 family.

It localises to the golgi apparatus membrane. The protein is UDP-GlcNAc:betaGal beta-1,3-N-acetylglucosaminyltransferase 9 of Homo sapiens (Human).